The following is an 822-amino-acid chain: Putative pentatricopeptide repeat-containing protein At5g13230, mitochondrial (822 aa).

The N-terminal 70 residues, 1 to 70 (MIVFMRIIHV…QKNDPISAKA (70 aa)), are a transit peptide targeting the mitochondrion. PPR repeat units lie at residues 48–82 (DSHAYGAMLRRCIQKNDPISAKAIHCDILKKGSCL), 83–117 (DLFATNILLNAYVKAGFDKDALNLFDEMPERNNVS), 145–179 (NPHVFTSFLKLFVSLDKAEICPWLHSPIVKLGYDS), 180–210 (NAFVGAALINAYSVCGSVDSARTVFEGILCK), 211–245 (DIVVWAGIVSCYVENGYFEDSLKLLSCMRMAGFMP), 246–280 (NNYTFDTALKASIGLGAFDFAKGVHGQILKTCYVL), 281–311 (DPRVGVGLLQLYTQLGDMSDAFKVFNEMPKN), 312–346 (DVVPWSFMIARFCQNGFCNEAVDLFIRMREAFVVP), 347–381 (NEFTLSSILNGCAIGKCSGLGEQLHGLVVKVGFDL), 382–416 (DIYVSNALIDVYAKCEKMDTAVKLFAELSSKNEVS), 417–447 (WNTVIVGYENLGEGGKAFSMFREALRNQVSV), 448–482 (TEVTFSSALGACASLASMDLGVQVHGLAIKTNNAK), 483–513 (KVAVSNSLIDMYAKCGDIKFAQSVFNEMETI), 514–548 (DVASWNALISGYSTHGLGRQALRILDIMKDRDCKP), 549–584 (NGLTFLGVLSGCSNAGLIDQGQECFESMIRDHGIEP), and 585–619 (CLEHYTCMVRLLGRSGQLDKAMKLIEGIPYEPSVM). The type E motif stretch occupies residues 620-695 (IWRAMLSASM…EPGLSWIEHQ (76 aa)). The segment at 696–726 (GDVHYFSVGLSDHPDMKLINGMLEWLNMKAT) is type E(+) motif. The tract at residues 727 to 822 (RAGYVPDRNA…AGVCSCGDHW (96 aa)) is type DYW motif.

This sequence belongs to the PPR family. PCMP-H subfamily.

It is found in the mitochondrion. In Arabidopsis thaliana (Mouse-ear cress), this protein is Putative pentatricopeptide repeat-containing protein At5g13230, mitochondrial (PCMP-H89).